The following is a 485-amino-acid chain: Pumilio domain-containing protein 6 (485 aa).

2 disordered regions span residues Asn-29 to His-48 and Ser-55 to Pro-76. The span at Ser-55–Ser-68 shows a compositional bias: polar residues. Pumilio repeat units lie at residues Glu-86–Glu-124, Lys-125–Arg-163, Gln-164–Gln-200, Glu-201–Val-236, His-237–Gln-279, Cys-287–Asp-324, Cys-326–Glu-361, and Glu-372–Pro-411. The segment at Phe-439–Val-454 is RNA-binding.

Its function is as follows. RNA-binding protein that binds to the consensus sequence 5'-CUCUGUAUCUUGU-3' in mRNA 3'-UTRs and modulates mRNA expression and stability. Functions redundantly with puf-5 and puf-7 in oocyte formation and organization, early embryonic cell divisions, and repression of expression of glp-1 and other maternal mRNAs in late oogenesis. The protein is Pumilio domain-containing protein 6 of Caenorhabditis elegans.